The chain runs to 307 residues: Urease accessory protein UreD (307 aa).

The protein belongs to the UreD family. As to quaternary structure, ureD, UreF and UreG form a complex that acts as a GTP-hydrolysis-dependent molecular chaperone, activating the urease apoprotein by helping to assemble the nickel containing metallocenter of UreC. The UreE protein probably delivers the nickel.

The protein localises to the cytoplasm. Functionally, required for maturation of urease via the functional incorporation of the urease nickel metallocenter. This chain is Urease accessory protein UreD, found in Prochlorococcus marinus (strain NATL2A).